Consider the following 426-residue polypeptide: Tyrosine--tRNA ligase (426 aa).

Y35 serves as a coordination point for L-tyrosine. Residues 40–49 (PTADSLHIGH) carry the 'HIGH' region motif. Y172 and Q176 together coordinate L-tyrosine. The short motif at 232–236 (KLGKS) is the 'KMSKS' region element. K235 contributes to the ATP binding site. Positions 357-414 (ENIKDILVNSKLSKSKNNAKSVILSSSIRINNKKQKSIDFMFKKEDKLFNLFTLIKKG) constitute an S4 RNA-binding domain.

It belongs to the class-I aminoacyl-tRNA synthetase family. TyrS type 1 subfamily. Homodimer.

It localises to the cytoplasm. It carries out the reaction tRNA(Tyr) + L-tyrosine + ATP = L-tyrosyl-tRNA(Tyr) + AMP + diphosphate + H(+). In terms of biological role, catalyzes the attachment of tyrosine to tRNA(Tyr) in a two-step reaction: tyrosine is first activated by ATP to form Tyr-AMP and then transferred to the acceptor end of tRNA(Tyr). The sequence is that of Tyrosine--tRNA ligase from Wigglesworthia glossinidia brevipalpis.